A 461-amino-acid polypeptide reads, in one-letter code: tRNA modification GTPase MnmE (461 aa).

(6S)-5-formyl-5,6,7,8-tetrahydrofolate contacts are provided by Arg-22, Glu-87, and Arg-126. The TrmE-type G domain maps to Gly-223–Phe-382. Asn-233 is a K(+) binding site. GTP-binding positions include Asn-233–Ser-238, Thr-252–Thr-258, and Asp-277–Gly-280. Ser-237 contacts Mg(2+). Residues Thr-252, Ile-254, and Thr-257 each coordinate K(+). Thr-258 contacts Mg(2+). Lys-461 provides a ligand contact to (6S)-5-formyl-5,6,7,8-tetrahydrofolate.

It belongs to the TRAFAC class TrmE-Era-EngA-EngB-Septin-like GTPase superfamily. TrmE GTPase family. Homodimer. Heterotetramer of two MnmE and two MnmG subunits. The cofactor is K(+).

The protein resides in the cytoplasm. Its function is as follows. Exhibits a very high intrinsic GTPase hydrolysis rate. Involved in the addition of a carboxymethylaminomethyl (cmnm) group at the wobble position (U34) of certain tRNAs, forming tRNA-cmnm(5)s(2)U34. This chain is tRNA modification GTPase MnmE, found in Lysinibacillus sphaericus (strain C3-41).